The sequence spans 307 residues: MSENQQALNHVVSMEDLTVDQVMKLIKRGIEFKNGAQLPYEDHPIVSNLFFEDSTRTHKSFEVAEIKLGLERLDFDVKTSSVNKGETLYDTILTLSALGVDVCVIRHPEVDYYRELIASPTITTSIINGGDGSGQHPSQSLLDLMTIYEEFGHFEGLKVAIAGDLDHSRVAKSNMQILKRLGAELFFAGPEEWRSQEFADYGQFVTIDEIIDQVDVMMFLRVQHERHDSGAVFSKEDYHAQHGLTQERYDRLKETAILMHPAPINRDVEIADHLVEAPKSRIVQQMTNGVFVRMAILESVLASRNAN.

Residues arginine 56 and threonine 57 each contribute to the carbamoyl phosphate site. An L-aspartate-binding site is contributed by lysine 84. The carbamoyl phosphate site is built by arginine 106, histidine 136, and glutamine 139. Residues arginine 169 and arginine 221 each coordinate L-aspartate. Carbamoyl phosphate is bound by residues alanine 262 and proline 263.

The protein belongs to the aspartate/ornithine carbamoyltransferase superfamily. ATCase family. In terms of assembly, heterododecamer (2C3:3R2) of six catalytic PyrB chains organized as two trimers (C3), and six regulatory PyrI chains organized as three dimers (R2).

It carries out the reaction carbamoyl phosphate + L-aspartate = N-carbamoyl-L-aspartate + phosphate + H(+). It functions in the pathway pyrimidine metabolism; UMP biosynthesis via de novo pathway; (S)-dihydroorotate from bicarbonate: step 2/3. Catalyzes the condensation of carbamoyl phosphate and aspartate to form carbamoyl aspartate and inorganic phosphate, the committed step in the de novo pyrimidine nucleotide biosynthesis pathway. In Streptococcus pneumoniae (strain JJA), this protein is Aspartate carbamoyltransferase catalytic subunit.